Here is a 310-residue protein sequence, read N- to C-terminus: Transcription initiation factor IIB (310 aa).

The segment at D9 to D41 adopts a TFIIB-type zinc-finger fold. Zn(2+) is bound by residues C14, C17, C33, and C36. Repeat copies occupy residues S127–L210 and D221–E302.

Belongs to the TFIIB family.

Its function is as follows. Stabilizes TBP binding to an archaeal box-A promoter. Also responsible for recruiting RNA polymerase II to the pre-initiation complex (DNA-TBP-TFIIB). This Methanobrevibacter smithii (strain ATCC 35061 / DSM 861 / OCM 144 / PS) protein is Transcription initiation factor IIB.